We begin with the raw amino-acid sequence, 405 residues long: S-adenosylmethionine synthase (405 aa).

Position 139 to 144 (139 to 144 (GQGSVD)) interacts with ATP.

Belongs to the AdoMet synthase 2 family. Requires Mg(2+) as cofactor.

It catalyses the reaction L-methionine + ATP + H2O = S-adenosyl-L-methionine + phosphate + diphosphate. It participates in amino-acid biosynthesis; S-adenosyl-L-methionine biosynthesis; S-adenosyl-L-methionine from L-methionine: step 1/1. Its function is as follows. Catalyzes the formation of S-adenosylmethionine from methionine and ATP. The protein is S-adenosylmethionine synthase of Thermococcus gammatolerans (strain DSM 15229 / JCM 11827 / EJ3).